Reading from the N-terminus, the 133-residue chain is UPF0292 protein TON_0187 (133 aa).

A Toprim domain is found at 20–100; that stretch reads EGAIIVEGPR…RVDSETRKEL (81 aa). Mg(2+) contacts are provided by Glu-26, Asp-69, and Asp-71.

The protein belongs to the UPF0292 family. Requires Mg(2+) as cofactor.

This Thermococcus onnurineus (strain NA1) protein is UPF0292 protein TON_0187.